The sequence spans 361 residues: Chalcone synthase A (361 aa).

Cys168 is a catalytic residue.

This sequence belongs to the thiolase-like superfamily. Chalcone/stilbene synthases family.

It catalyses the reaction (E)-4-coumaroyl-CoA + 3 malonyl-CoA + 3 H(+) = 2',4,4',6'-tetrahydroxychalcone + 3 CO2 + 4 CoA. It functions in the pathway secondary metabolite biosynthesis; flavonoid biosynthesis. The primary product of this enzyme is 4,2',4',6'-tetrahydroxychalcone (also termed naringenin-chalcone or chalcone) which can under specific conditions spontaneously isomerize into naringenin. This is Chalcone synthase A (CHSA) from Ipomoea cordatotriloba (Tievine).